Here is a 186-residue protein sequence, read N- to C-terminus: Elongation factor P (186 aa).

Lysine 33 is subject to N6-(3,6-diaminohexanoyl)-5-hydroxylysine.

It belongs to the elongation factor P family. In terms of processing, may be beta-lysylated on the epsilon-amino group of Lys-33 by the combined action of EpmA and EpmB, and then hydroxylated on the C5 position of the same residue by EpmC (if this protein is present). Lysylation is critical for the stimulatory effect of EF-P on peptide-bond formation. The lysylation moiety may extend toward the peptidyltransferase center and stabilize the terminal 3-CCA end of the tRNA. Hydroxylation of the C5 position on Lys-33 may allow additional potential stabilizing hydrogen-bond interactions with the P-tRNA.

It is found in the cytoplasm. Its pathway is protein biosynthesis; polypeptide chain elongation. Functionally, involved in peptide bond synthesis. Alleviates ribosome stalling that occurs when 3 or more consecutive Pro residues or the sequence PPG is present in a protein, possibly by augmenting the peptidyl transferase activity of the ribosome. Modification of Lys-33 is required for alleviation. The sequence is that of Elongation factor P from Acidithiobacillus ferrooxidans (strain ATCC 23270 / DSM 14882 / CIP 104768 / NCIMB 8455) (Ferrobacillus ferrooxidans (strain ATCC 23270)).